An 89-amino-acid chain; its full sequence is Small ribosomal subunit protein uS15 (89 aa).

This sequence belongs to the universal ribosomal protein uS15 family. In terms of assembly, part of the 30S ribosomal subunit. Forms a bridge to the 50S subunit in the 70S ribosome, contacting the 23S rRNA.

One of the primary rRNA binding proteins, it binds directly to 16S rRNA where it helps nucleate assembly of the platform of the 30S subunit by binding and bridging several RNA helices of the 16S rRNA. Its function is as follows. Forms an intersubunit bridge (bridge B4) with the 23S rRNA of the 50S subunit in the ribosome. The polypeptide is Small ribosomal subunit protein uS15 (Acinetobacter baylyi (strain ATCC 33305 / BD413 / ADP1)).